Reading from the N-terminus, the 1737-residue chain is MKLKYLSTILPAQDGEAKISNISCSPNGSRAAIACSDRSVALLDENGVQKDRFTCKPIDAKYGKKSFTVLCMTFSPDSSRIAIGQSDNVLFIYKVGTSWNEKKVIVNKFVQPSAVTCLSWPFDDKILVGQLDGKVRIGLIKTNKCSSLYKTDETVVSIQTHPKRTSFVSAHQDGSIILYNFSSRTQSKICTLQVPPYNLVFTNHGLVVATSDRRVLSYTENGVVQQQFDYNDQSEKEFSSISCDPTAQNVVVASYDRLRLFSWSARRGAWDEGAPLEIQNAYTIGALGWKMDGSTIYAGTVCGGVFSVDCCLRRGMLKSRFETTYVAPSHVILRDVTNDTRTNVISNKGLAIDELKIMGKDRYVIGYTSSSIIIADTESQRFSELEWQSGGHEKFYFDFNNCCLIINAGEVTVVEYGVDGSLGWVRTELTSPHLLSVQVSGPDVEEHKKVKKLAYLVDPTTISIINLINGQQESFINHTGAVDWIELNERASKLLYRDKRSKVTLVDISSDQRSVLLSFCTYVQWVPMSDVIVAQSGDNLSIWYNPDLPEQVTNMKIKGEVEAVLRDADRTEVIVQEPTAKVAYELDNTQIEFGAALEKRDFDRAVAFLESNTSGTDAYSMWIRVAEMALEHGNLFVAQRCYAAINDVAKVRKLHDILEIADEASISIGGDGTHFYKVRAMLAIMGRKFKEAERIFLEQNDTESAIGMYTSLHKWDEALELAKVLNYPEYEQLKTSYLRALSDTGQDSKAAELKVSDGDTLSAIQLYIKSNKPLSALSAANNDSVLSQDENILRQIADSLVKSQLYDKAGDVYEKLKDFDKAVEYFKKGDAYGKAIQLARFAFPEKVVTLEQEWGLHLEYIGQYDAAVNHFVEANDLKKAVEAAIRAKEWPKALSIVENIQDQKVRTGYYGEIADHYSNKGDFERAERLFVEAGLFNDAIMMYGKNNKWIDAFRLSEEFHGREATISSYLAKAEDLDEHGRFAEAEQLYITIGMPHKAIQMYDRVGRDDDVLRLVERYHGEHMHETRKRFATQYEERGDLKAAEEQFLKAGDFRSAVNMYKDSEMWSDAYRIAKTEGGENMEKQVLFMWAKSIGGDAAVKLLNKHGMLMEGIDFACETGAFDLAFDLARIGAKDRMGTVHVRLATQLEEEGRLEDASKHYVEGNKPELAVEMFIRDNDWADAERVAKDHCESLLPDVYTGQARRAIEEGDHLRAETFLLRANKPDIILRYFIENEMWPDALRIAQNYLPHQAALIQEEYEKSELRNGARGVDSFVAQAKEWEQQGDWRKAVSALLKINRDSTDNDALIKHSTEKAADLVMKFLMGDEEYIGAALGALDEANCNEKAAELLLLFGQSRQAINALCRAKQWAKAKQVAQEYLPEMVPEIEKIYKESLKSEGRLGELIDVDVITAIDMMIENDQWDKALDTAKSQNYRPLLDKYVAQYAAILVHRNDLSRVLAVLERYGASANPANFSIYKLLMEETLAKPRFDYTEIARVRNVHLDVYNALQKESSEHFEEFSRALWALHLIAMRTALEEIGDSVPEVQKLCLKQSLSLLRYTDILVADRIFYEAGAAAKDYGSEYESLGFLLLNHYLDLVDAIEEGNGELVDYSPFENSDIPTEVSLPTRQWLESAKHEEMKEWVLASSVDDAHAKELVYDKRGVFEASLKDKRGTAEPCLVTGYPVIESTVRIGSMVAEKDNLNKFLVVIKSNQTENLLNVQNFVAKWAGSPLAISL.

WD repeat units lie at residues 14–53 (DGEAKISNISCSPNGSRAAIACSDRSVALLDENGVQKDRF), 63–103 (GKKS…NEKK), 110–150 (VQPS…SLYK), 151–189 (TDETVVSIQTHPKRTSFVSAHQDGSIILYNFSSRTQSKI), 191–229 (TLQVPPYNLVFTNHGLVVATSDRRVLSYTENGVVQQQFD), 233–273 (QSEK…WDEG), and 511–553 (DQRS…EQVT). TPR repeat units lie at residues 700–737 (NDTESAIGMYTSLHKWDEALELAKVLNYPEYEQLKTSY), 803–836 (SQLYDKAGDVYEKLKDFDKAVEYFKKGDAYGKAI), 848–881 (VTLEQEWGLHLEYIGQYDAAVNHFVEANDLKKAV), 907–940 (TGYYGEIADHYSNKGDFERAERLFVEAGLFNDAI), 979–1012 (HGRFAEAEQLYITIGMPHKAIQMYDRVGRDDDVL), 1037–1070 (RGDLKAAEEQFLKAGDFRSAVNMYKDSEMWSDAY), and 1137–1170 (GTVHVRLATQLEEEGRLEDASKHYVEGNKPELAV).

It belongs to the IFT172 family. Component of the IFT complex B composed of at least che-2, che-13, dyf-1, dyf-3, dyf-6, dyf-11, dyf-13, ift-20, ift-74, ift-81, ifta-2, osm-1, osm-5 and osm-6. In terms of tissue distribution, expressed in amphid and phasmid chemosensory neurons, where it appears to concentrate at the base of the transition zones, which correspond to the basal bodies of motile and sensory cilia. Moves in the retrograde direction along cilia and dendrites, suggesting that it is retrieved from the distal endings of the cilia by a retrograde transport pathway that moves it along cilia and then dendrites, back to the neuronal cell body.

It is found in the cell projection. The protein resides in the cilium. Component of the intraflagellar transport (IFT) complex B required for transport of proteins in the motile cilium. May be required for ciliary entrance and transport of specific ciliary cargo proteins such as che-3 which are related to motility. Required for the maintenance and formation of chemosensory cilia that detect chemosensory cues. This chain is Intraflagellar transport protein osm-1, found in Caenorhabditis elegans.